Consider the following 209-residue polypeptide: MDLERGDKKPPPPPPPAPRTAAATTTTTTTPACSGKKRPPLRDSLVALQPVLLRAAAALAAAAAAAVMALDAQSYTAVVAIVGTRPLTQTFTAKFSDTPAFVYFVIANAIAAAYNLLVLLVRRRRRTTAGLVVRMLDMVVMALLATGAAAAASMAELGRNGNARARWNPVCDRFGSFCRRGGAALAASFVGVALMLALNLLSAASGAGC.

A compositionally biased stretch (basic and acidic residues) spans 1–10 (MDLERGDKKP). The segment at 1-39 (MDLERGDKKPPPPPPPAPRTAAATTTTTTTPACSGKKRP) is disordered. Topologically, residues 1 to 49 (MDLERGDKKPPPPPPPAPRTAAATTTTTTTPACSGKKRPPLRDSLVALQ) are cytoplasmic. The span at 19-32 (RTAAATTTTTTTPA) shows a compositional bias: low complexity. A helical transmembrane segment spans residues 50–70 (PVLLRAAAALAAAAAAAVMAL). At 71-100 (DAQSYTAVVAIVGTRPLTQTFTAKFSDTPA) the chain is on the extracellular side. A helical transmembrane segment spans residues 101-121 (FVYFVIANAIAAAYNLLVLLV). The Cytoplasmic portion of the chain corresponds to 122-134 (RRRRRTTAGLVVR). A helical transmembrane segment spans residues 135-155 (MLDMVVMALLATGAAAAASMA). Over 156-180 (ELGRNGNARARWNPVCDRFGSFCRR) the chain is Extracellular. The chain crosses the membrane as a helical span at residues 181 to 201 (GGAALAASFVGVALMLALNLL). The Cytoplasmic portion of the chain corresponds to 202–209 (SAASGAGC).

The protein belongs to the Casparian strip membrane proteins (CASP) family. As to quaternary structure, homodimer and heterodimers.

It localises to the cell membrane. The sequence is that of CASP-like protein 1B1 from Zea mays (Maize).